Here is a 563-residue protein sequence, read N- to C-terminus: Arginine--tRNA ligase (563 aa).

The 'HIGH' region signature appears at 121–131; the sequence is PNIAKPFSIGH.

It belongs to the class-I aminoacyl-tRNA synthetase family. As to quaternary structure, monomer.

The protein resides in the cytoplasm. It carries out the reaction tRNA(Arg) + L-arginine + ATP = L-arginyl-tRNA(Arg) + AMP + diphosphate. The chain is Arginine--tRNA ligase from Streptococcus pyogenes serotype M18 (strain MGAS8232).